The sequence spans 226 residues: 3-dehydroquinate dehydratase (226 aa).

3-dehydroquinate is bound by residues Ser21, 42 to 44, and Arg70; that span reads EVR. Catalysis depends on His124, which acts as the Proton donor/acceptor. The active-site Schiff-base intermediate with substrate is the Lys149. Positions 187, 206, and 210 each coordinate 3-dehydroquinate.

Belongs to the type-I 3-dehydroquinase family. In terms of assembly, homodimer.

The catalysed reaction is 3-dehydroquinate = 3-dehydroshikimate + H2O. Its pathway is metabolic intermediate biosynthesis; chorismate biosynthesis; chorismate from D-erythrose 4-phosphate and phosphoenolpyruvate: step 3/7. In terms of biological role, involved in the third step of the chorismate pathway, which leads to the biosynthesis of aromatic amino acids. Catalyzes the cis-dehydration of 3-dehydroquinate (DHQ) and introduces the first double bond of the aromatic ring to yield 3-dehydroshikimate. This Methanothrix thermoacetophila (strain DSM 6194 / JCM 14653 / NBRC 101360 / PT) (Methanosaeta thermophila) protein is 3-dehydroquinate dehydratase.